The primary structure comprises 320 residues: Ribose-phosphate pyrophosphokinase (320 aa).

ATP is bound at residue 41–43 (NDN). Mg(2+) contacts are provided by H134 and D175. Residue K198 is part of the active site. D-ribose 5-phosphate is bound by residues R200 and D224.

The protein belongs to the ribose-phosphate pyrophosphokinase family. Class I subfamily. Homohexamer. Mg(2+) is required as a cofactor.

It is found in the cytoplasm. It carries out the reaction D-ribose 5-phosphate + ATP = 5-phospho-alpha-D-ribose 1-diphosphate + AMP + H(+). It participates in metabolic intermediate biosynthesis; 5-phospho-alpha-D-ribose 1-diphosphate biosynthesis; 5-phospho-alpha-D-ribose 1-diphosphate from D-ribose 5-phosphate (route I): step 1/1. Its function is as follows. Involved in the biosynthesis of the central metabolite phospho-alpha-D-ribosyl-1-pyrophosphate (PRPP) via the transfer of pyrophosphoryl group from ATP to 1-hydroxyl of ribose-5-phosphate (Rib-5-P). The chain is Ribose-phosphate pyrophosphokinase from Deinococcus radiodurans (strain ATCC 13939 / DSM 20539 / JCM 16871 / CCUG 27074 / LMG 4051 / NBRC 15346 / NCIMB 9279 / VKM B-1422 / R1).